The sequence spans 393 residues: Sialyltransferase-like protein 1 (393 aa).

The Cytoplasmic portion of the chain corresponds to 1–8 (MKRPLRRP). A helical; Signal-anchor for type II membrane protein membrane pass occupies residues 9-27 (FAVLLFVVLCAAASFPSVL). At 28–393 (RRSVGPAPVL…IAVPPVVFYH (366 aa)) the chain is on the lumenal side. N-linked (GlcNAc...) asparagine glycosylation is found at Asn-49, Asn-212, and Asn-258.

It belongs to the glycosyltransferase 29 family.

The protein resides in the golgi apparatus membrane. Possesses sialyltransferase-like activity in vitro. Transfers sialic acid to the oligosaccharide Gal-beta-1,3-GalNAc and to glycoproteins such as asialofetuin, alpha-1-acid glycoprotein (NeuAc-alpha-2,3-Gal-beta-1,3-GalNAc-) and andasialo-alpha-1-acid glycoprotein. The transferred sialic acid is linked to galactose of Gal-beta-1,3-GalNAc through alpha-2,6-linkage. The sequence is that of Sialyltransferase-like protein 1 from Oryza sativa subsp. indica (Rice).